A 544-amino-acid chain; its full sequence is (E,E)-germacrene B synthase (544 aa).

The Mg(2+) site is built by aspartate 296, aspartate 300, and glutamate 449. The DDXXD motif motif lies at 296 to 300 (DDTFD).

This sequence belongs to the terpene synthase family. Mg(2+) is required as a cofactor. Mn(2+) serves as cofactor.

Its subcellular location is the cytoplasm. The catalysed reaction is (2E,6E)-farnesyl diphosphate = (1E,4E)-germacrene B + diphosphate. It functions in the pathway secondary metabolite biosynthesis; terpenoid biosynthesis. Its function is as follows. Involved in the biosynthesis of germacrene B. The protein is (E,E)-germacrene B synthase (SSTLH1) of Solanum habrochaites (Wild tomato).